Reading from the N-terminus, the 1123-residue chain is Telomerase reverse transcriptase (1123 aa).

Disordered regions lie at residues 191–242 and 410–439; these read ENKR…KTTK and GTTS…PKCP. Positions 201 to 210 are enriched in polar residues; the sequence is QPPTKRQWLS. The region spanning 596 to 929 is the Reverse transcriptase domain; it reads LVDDAEAESS…PFVRWTGLLI (334 aa). Mg(2+) contacts are provided by Asp691, Asp860, and Asp861.

It belongs to the reverse transcriptase family. Telomerase subfamily. In terms of assembly, component of the telomerase ribonucleoprotein complex. Interacts with POT1A.

Its subcellular location is the nucleus. It is found in the chromosome. It localises to the telomere. The enzyme catalyses DNA(n) + a 2'-deoxyribonucleoside 5'-triphosphate = DNA(n+1) + diphosphate. In terms of biological role, telomerase is a ribonucleoprotein enzyme essential for the replication of chromosome termini in most eukaryotes. It elongates telomeres. It is a reverse transcriptase that adds simple sequence repeats to chromosome ends by copying a template sequence within the RNA component of the enzyme. Required to prevent genome instability induced by breakage-fusion-bridge (BFB) cycles. Can extend completely non-telomeric sequences using RNA template in vitro. This Arabidopsis thaliana (Mouse-ear cress) protein is Telomerase reverse transcriptase (TERT).